The sequence spans 371 residues: DNA repair and recombination protein rti1 (371 aa).

The segment at 346-371 is disordered; the sequence is IDHNRSMPIRRPSLTSNNSANTFSTK. The span at 358–371 shows a compositional bias: polar residues; that stretch reads SLTSNNSANTFSTK.

It belongs to the RAD52 family. In terms of assembly, interacts with rph51 and rph54.

In terms of biological role, active in the repair of DNA damage and in mating-type switching. Probably involved in the repair of DNA double-strands breaks. Has a role in promoting S phase completion. This chain is DNA repair and recombination protein rti1 (rti1), found in Schizosaccharomyces pombe (strain 972 / ATCC 24843) (Fission yeast).